Consider the following 824-residue polypeptide: E3 ubiquitin-protein ligase TRIM71 (824 aa).

The RING-type zinc finger occupies cysteine 23–aspartate 93. Residues serine 37 to serine 56 form a disordered region. A B box-type 1; atypical zinc finger spans residues leucine 147–leucine 194. Zn(2+)-binding residues include cysteine 152, cysteine 155, cysteine 176, histidine 180, cysteine 234, histidine 237, cysteine 257, and histidine 262. Residues glutamate 229 to leucine 270 form a B box-type 2 zinc finger. The stretch at glutamine 293 to lysine 321 forms a coiled coil. One copy of the Filamin repeat lies at serine 435–valine 536. 6 NHL repeats span residues methionine 549–cysteine 592, histidine 596–aspartate 639, leucine 643–aspartate 686, leucine 690–aspartate 733, alanine 737–asparagine 780, and leucine 784–phenylalanine 824.

This sequence belongs to the TRIM/RBCC family.

The protein resides in the cytoplasm. The protein localises to the P-body. The enzyme catalyses S-ubiquitinyl-[E2 ubiquitin-conjugating enzyme]-L-cysteine + [acceptor protein]-L-lysine = [E2 ubiquitin-conjugating enzyme]-L-cysteine + N(6)-ubiquitinyl-[acceptor protein]-L-lysine.. It participates in protein modification; protein ubiquitination. Functionally, E3 ubiquitin-protein ligase that cooperates with the microRNAs (miRNAs) machinery and promotes embryonic stem cells proliferation and maintenance. Binds to miRNAs and participates in post-transcriptional repression of transcripts. Required to maintain proliferation and prevent premature differentiation of neural progenitor cells during early neural development. This Danio rerio (Zebrafish) protein is E3 ubiquitin-protein ligase TRIM71 (trim71).